The following is a 350-amino-acid chain: MIKKMATEDLDRFGEKIIEGFQLSDDDLRALLSLESEEELEKLYYVARKVRNHYFGNRVFLNCFIYFSTYCKNQCAFCYYNCKNEINRYRLSREEIKETCKALKGAGFHMIDLTMGEDPYYYEEPDRFVELVQMVKNELGLPIMISPGVMDNATLLKAREKGANFFALYQETYDQELYEKLRVGQSFKGRYNTRRFAKEQGYCIEDGILTGVGNDIESTIKSLRGMKSNDPDMVRVMTFLPQEGTPLERFKENSNLSELKIIAILRLIFPKCLIPASLDLEGIDGMVHRLNAGANIVTSILPSDSKLEGVANYDRDLEERDRDIKSVIKRLEGMGMEPAPQAEFETVLRC.

A Radical SAM core domain is found at 57-279; it reads NRVFLNCFIY…PKCLIPASLD (223 aa). [4Fe-4S] cluster is bound by residues Cys71 and Cys75. Phe77 provides a ligand contact to S-adenosyl-L-methionine. [4Fe-4S] cluster is bound at residue Cys78. (3R)-3-methyl-D-ornithine contacts are provided by Asp112, Ser146, and Tyr169. Glu171, Arg182, and Arg190 together coordinate S-adenosyl-L-methionine. Arg235 contacts (3R)-3-methyl-D-ornithine. The S-adenosyl-L-methionine site is built by Leu240 and Gln242. 3 residues coordinate (3R)-3-methyl-D-ornithine: Ser277, Thr298, and Ser299.

Belongs to the radical SAM superfamily. PylB family. The cofactor is [4Fe-4S] cluster. Requires S-adenosyl-L-methionine as cofactor.

The catalysed reaction is L-lysine = (3R)-3-methyl-D-ornithine. Its pathway is amino-acid biosynthesis; L-pyrrolysine biosynthesis. Its function is as follows. Catalyzes the isomerization of L-lysine to (3R)-3-methyl-D-ornithine via a radical-based mechanism. Is required for the biosynthesis of pyrrolysine. The sequence is that of 3-methylornithine synthase (pylB) from Methanosarcina acetivorans (strain ATCC 35395 / DSM 2834 / JCM 12185 / C2A).